The chain runs to 312 residues: Bifunctional pinoresinol-lariciresinol reductase (312 aa).

NADP(+)-binding positions include 11-17, R36, and K45; that span reads GGTGYIG. K138 functions as the Proton acceptor in the catalytic mechanism. NADP(+) is bound at residue R142. H270 serves as a coordination point for substrate.

Belongs to the NmrA-type oxidoreductase family. Isoflavone reductase subfamily. As to quaternary structure, dimer.

The enzyme catalyses (+)-lariciresinol + NADP(+) = (+)-pinoresinol + NADPH + H(+). It catalyses the reaction (-)-secoisolariciresinol + NADP(+) = (+)-lariciresinol + NADPH + H(+). Functionally, reductase involved in lignan biosynthesis. Catalyzes the enantioselective sequential conversion of (+)-pinoresinol into (+)-lariciresinol and of (+)-lariciresinol into (-)-secoisolariciresinol. Abstracts the 4R-hydride from the NADPH cofactor during catalysis. In Thuja plicata (Western red-cedar), this protein is Bifunctional pinoresinol-lariciresinol reductase.